The sequence spans 108 residues: MLTSTTDIVQGRTIARYHGIVTAEVVYGTNALRDFFAGIRDLIGGRTGSYEQIFEKGHREAIAELTERAQKLGANGVIGVAVNTGTINIDDRGALLLITATGTAVTVD.

Belongs to the UPF0145 family.

The sequence is that of UPF0145 protein sll118 from Synechocystis sp. (strain ATCC 27184 / PCC 6803 / Kazusa).